The sequence spans 101 residues: Small ribosomal subunit protein uS14A (101 aa).

A disordered region spans residues 35-56; the sequence is TSSYEQRLDAQRALSRQPRDAS.

Belongs to the universal ribosomal protein uS14 family. In terms of assembly, part of the 30S ribosomal subunit. Contacts proteins S3 and S10.

Functionally, binds 16S rRNA, required for the assembly of 30S particles and may also be responsible for determining the conformation of the 16S rRNA at the A site. This Mycobacterium marinum (strain ATCC BAA-535 / M) protein is Small ribosomal subunit protein uS14A.